The sequence spans 205 residues: dITP/XTP pyrophosphatase (205 aa).

11-16 lines the substrate pocket; that stretch reads TKNMGK. Mg(2+) is bound by residues E44 and D73. The Proton acceptor role is filled by D73. Substrate contacts are provided by residues S74, 158–161, K181, and 186–187; these read FGYD and HR.

Belongs to the HAM1 NTPase family. Homodimer. Mg(2+) serves as cofactor.

It catalyses the reaction XTP + H2O = XMP + diphosphate + H(+). The enzyme catalyses dITP + H2O = dIMP + diphosphate + H(+). The catalysed reaction is ITP + H2O = IMP + diphosphate + H(+). Its function is as follows. Pyrophosphatase that catalyzes the hydrolysis of nucleoside triphosphates to their monophosphate derivatives, with a high preference for the non-canonical purine nucleotides XTP (xanthosine triphosphate), dITP (deoxyinosine triphosphate) and ITP. Seems to function as a house-cleaning enzyme that removes non-canonical purine nucleotides from the nucleotide pool, thus preventing their incorporation into DNA/RNA and avoiding chromosomal lesions. This chain is dITP/XTP pyrophosphatase, found in Bacillus cereus (strain ATCC 14579 / DSM 31 / CCUG 7414 / JCM 2152 / NBRC 15305 / NCIMB 9373 / NCTC 2599 / NRRL B-3711).